A 62-amino-acid polypeptide reads, in one-letter code: Protein YnfQ (62 aa).

It belongs to the YmcF/YnqF peptide family.

This chain is Protein YnfQ, found in Escherichia coli (strain K12).